We begin with the raw amino-acid sequence, 200 residues long: Histone chaperone asf1b (200 aa).

This sequence belongs to the ASF1 family. As to quaternary structure, interacts with histone H3 and histone H4.

Its subcellular location is the nucleus. In terms of biological role, histone chaperone that facilitates histone deposition and histone exchange and removal during nucleosome assembly and disassembly. The polypeptide is Histone chaperone asf1b (asf1b) (Xenopus tropicalis (Western clawed frog)).